The chain runs to 297 residues: Acetaldehyde dehydrogenase (297 aa).

15 to 18 (SGSI) is a binding site for NAD(+). The active-site Acyl-thioester intermediate is Cys130. Residues 162-170 (SAGIATREN) and Asn272 each bind NAD(+).

Belongs to the acetaldehyde dehydrogenase family.

It catalyses the reaction acetaldehyde + NAD(+) + CoA = acetyl-CoA + NADH + H(+). The polypeptide is Acetaldehyde dehydrogenase (Burkholderia pseudomallei (strain 1106a)).